The following is a 555-amino-acid chain: Esterase-5A (555 aa).

Positions 1–19 (MHLVRWLICLIQLWIQLGA) are cleaved as a signal peptide. Cys-87 and Cys-106 are joined by a disulfide. Residues Asn-95 and Asn-116 are each glycosylated (N-linked (GlcNAc...) asparagine). Ser-210 acts as the Acyl-ester intermediate in catalysis. Cys-262 and Cys-274 are oxidised to a cystine. Asn-479 and Asn-510 each carry an N-linked (GlcNAc...) asparagine glycan. A disulfide bridge links Cys-518 with Cys-539.

The protein belongs to the type-B carboxylesterase/lipase family.

Its subcellular location is the secreted. It carries out the reaction a carboxylic ester + H2O = an alcohol + a carboxylate + H(+). In Drosophila miranda (Fruit fly), this protein is Esterase-5A (Est-5A).